The chain runs to 85 residues: Large ribosomal subunit protein bL31B (85 aa).

Belongs to the bacterial ribosomal protein bL31 family. Type B subfamily. As to quaternary structure, part of the 50S ribosomal subunit.

The chain is Large ribosomal subunit protein bL31B from Serratia proteamaculans (strain 568).